Consider the following 917-residue polypeptide: MFGKILRSIFGSKNDRELKRMGKQVKLINELESTFVKLTDEELKAKTAEFKKRHQDGESLNALLPEAFAAAREASKRVMGMRHFDVQLIGGMTLHEGCIAEMRTGEGKTLMATLAAYLNAISGKGVHIVTVNDYLARRDANWMTPLYAALGLTTGSVYSMQPQQEKREAYAADITYGTNNEFGFDYLRDNMALRKEDRMQRPLNFAIVDEVDSILIDEARTPLIISGAAEDSSELYRAINKFIPSLKRQEIVEKGEEPSELGHYTLDEKTRQVELTEMGHEVIEDTLTKAGLLKEDDSLYAAGNLGLLHHVYAALKAHVLFHRNVEYIIQNDQVVLIDEHTGRTMAGRRLSEGLHQALEAKEGLQIQAESQTLASTTFQNYFRIYPKLSGMTGTADTEAFEFRHIYGLNVVVIPTNKPIQRTDLNDLVFLSVEEKYEAIVRDVNEYRAKGVPVLVGTASVETSEAMSERLKKADIPHEVLNAKQHEREAEIIANAGRPGNVTIATNMAGRGTDIVLGGNLEAELAKLENPTEEQIAKVKSEWQTRHDQVVAAGGLHIIGTERHESRRIDNQLRGRAGRQGDPGLSRFYLSLEDNLMRIFASDRMRSFMQSIGMEKGEAIEHRMVTNAIEKAQRKVEGRNFDYRKQILEYDDVANDQRRVIYSQRNELLDADEIHDAIDGIRQDVIADVIAGFIPPQSVEEQWDVAGLEQSLANEYGVQLPIQKWLDDDDKLNEESLRDKITQAMDDAYNVKREQLGNSVVMLEKQLMLHVLDQLWKEHLQNMDHLRQGIGLRAYAQKNPKQEYKRESFEMFQTLLESLKHDVIRLLFRVQPMTEEQMNEMEKRRQEEAERQRQRMQLRHAEAPSQLAAPATPATPEELSELKPERPYVRGGSKVGRNDPCPCGSGQKYKSCHGKLTG.

ATP-binding positions include glutamine 87, 105–109, and aspartate 513; that span reads GEGKT. The segment at 834-917 is disordered; the sequence is EEQMNEMEKR…YKSCHGKLTG (84 aa). Positions 839–852 are enriched in basic and acidic residues; that stretch reads EMEKRRQEEAERQR. Residues 862–876 show a composition bias toward low complexity; it reads APSQLAAPATPATPE. 4 residues coordinate Zn(2+): cysteine 900, cysteine 902, cysteine 911, and histidine 912.

Belongs to the SecA family. Monomer and homodimer. Part of the essential Sec protein translocation apparatus which comprises SecA, SecYEG and auxiliary proteins SecDF-YajC and YidC. Zn(2+) serves as cofactor.

It localises to the cell inner membrane. The protein resides in the cytoplasm. It carries out the reaction ATP + H2O + cellular proteinSide 1 = ADP + phosphate + cellular proteinSide 2.. Functionally, part of the Sec protein translocase complex. Interacts with the SecYEG preprotein conducting channel. Has a central role in coupling the hydrolysis of ATP to the transfer of proteins into and across the cell membrane, serving both as a receptor for the preprotein-SecB complex and as an ATP-driven molecular motor driving the stepwise translocation of polypeptide chains across the membrane. In Saccharophagus degradans (strain 2-40 / ATCC 43961 / DSM 17024), this protein is Protein translocase subunit SecA.